The chain runs to 324 residues: tRNA U34 carboxymethyltransferase (324 aa).

Residues Lys91, Trp105, Lys110, Gly130, 152-154 (DPS), 181-182 (IE), Met196, Tyr200, and Arg315 contribute to the carboxy-S-adenosyl-L-methionine site.

The protein belongs to the class I-like SAM-binding methyltransferase superfamily. CmoB family. Homotetramer.

The enzyme catalyses carboxy-S-adenosyl-L-methionine + 5-hydroxyuridine(34) in tRNA = 5-carboxymethoxyuridine(34) in tRNA + S-adenosyl-L-homocysteine + H(+). Catalyzes carboxymethyl transfer from carboxy-S-adenosyl-L-methionine (Cx-SAM) to 5-hydroxyuridine (ho5U) to form 5-carboxymethoxyuridine (cmo5U) at position 34 in tRNAs. This Aliivibrio fischeri (strain MJ11) (Vibrio fischeri) protein is tRNA U34 carboxymethyltransferase.